Consider the following 475-residue polypeptide: MAEAATRSVGKVTQVIGAVVDVAFEGELPAILNALETDNNGNRLVLEVAQHLGENEVRTIAMDSSEGLVRGQQVIDTGAPISVPVGDETLGRIMNVIGEPVDEAGPLNTAHKRAIHQDAPAYVEQSTEAQILVTGIKVVDLLAPYARGGKIGLFGGAGVGKTVLIMELINNVAKAHGGYSVFAGVGERTREGNDLYHEMIESGVNKHGGGEGSKAALVYGQMNEPPGARARVALTGLTVAEHFRDQGQDVLFFVDNIFRFTQAGSEVSALLGRIPSAVGYQPTLATDMGQMQERITTTTTGSITSVQAIYVPADDLTDPAPATSFAHLDATTVLSRSIAEKGIYPAVDPLDSTSRMLDPMVVGEEHYEVARKVQSTLQRYKALQDIIAILGMDELSEEDKLAVARARKIERFLSQPFFVAEVFTGSPGKLVALEDTIKGFKGLVNGEYDNLPEAAFYMVGSIDEAIEKAKKLAAA.

Position 155–162 (155–162 (GGAGVGKT)) interacts with ATP.

It belongs to the ATPase alpha/beta chains family. F-type ATPases have 2 components, CF(1) - the catalytic core - and CF(0) - the membrane proton channel. CF(1) has five subunits: alpha(3), beta(3), gamma(1), delta(1), epsilon(1). CF(0) has three main subunits: a(1), b(2) and c(9-12). The alpha and beta chains form an alternating ring which encloses part of the gamma chain. CF(1) is attached to CF(0) by a central stalk formed by the gamma and epsilon chains, while a peripheral stalk is formed by the delta and b chains.

It localises to the cell inner membrane. It carries out the reaction ATP + H2O + 4 H(+)(in) = ADP + phosphate + 5 H(+)(out). Its function is as follows. Produces ATP from ADP in the presence of a proton gradient across the membrane. The catalytic sites are hosted primarily by the beta subunits. This chain is ATP synthase subunit beta, found in Rhizobium etli (strain CIAT 652).